A 131-amino-acid chain; its full sequence is Type 3 secretion system pilotin (131 aa).

The signal sequence occupies residues 1 to 15; that stretch reads MSRIIALIISFLLVG. Cysteine 16 is lipidated: N-palmitoyl cysteine. Cysteine 16 carries S-diacylglycerol cysteine lipidation.

It belongs to the ExsB/YscW family. As to quaternary structure, interacts with YscC/SctC.

It localises to the cell outer membrane. Involved in the synthesis of the type III secretion system (T3SS), also called injectisome, which is used to inject bacterial effector proteins into eukaryotic host cells. Pilot protein that is required for the proper localization of the secretin YscC/SctC in the outer membrane. Also required for efficient oligomerization of YscC/SctC and stabilization of the oligomers. The chain is Type 3 secretion system pilotin from Yersinia enterocolitica.